The primary structure comprises 210 residues: Quaternary-amine-specific corrinoid protein (210 aa).

The region spanning 1 to 90 (MADWKNLTQA…VLGSGDTAVA (90 aa)) is the B12-binding N-terminal domain. The region spanning 90–210 (AGTILIGTAH…GVKICQAWVG (121 aa)) is the B12-binding domain. Residue His103 participates in methylcob(III)alamin binding.

Belongs to the methylamine corrinoid protein family. The proline betaine:THF methyl transfer system is composed of two methyltransferases, MtpB and MtqA, and the corrinoid protein MtqC. The L-carnitine:THF methyl transfer system is composed of two methyltransferases, MtcB and MtqA, and the corrinoid protein MtqC.

In terms of biological role, involved in the degradation of the quaternary amines L-proline betaine and L-carnitine. Component of a corrinoid-dependent methyltransferase system that transfers a methyl group from L-proline betaine or L-carnitine to tetrahydrofolate (THF), forming methyl-THF, a key intermediate in the Wood-Ljungdahl acetogenesis pathway. Acts as a methyl group carrier between MtpB or MtcB, and MtqA. A methyl group from L-proline betaine or L-carnitine is first transferred to the corrinoid prosthetic group of MtqC by MtpB or MtcB, respectively, and then transferred from MtqC to THF by MtqA. The sequence is that of Quaternary-amine-specific corrinoid protein from Eubacterium limosum.